The following is a 408-amino-acid chain: tRNA-specific 2-thiouridylase MnmA (408 aa).

ATP contacts are provided by residues 38–45 (GMSGGVDS) and M64. Residues 124 to 126 (NPD) are interaction with target base in tRNA. The active-site Nucleophile is the C129. C129 and C231 are oxidised to a cystine. An ATP-binding site is contributed by G153. The tract at residues 181-183 (KDQ) is interaction with tRNA. The active-site Cysteine persulfide intermediate is the C231. The segment at 348-349 (RY) is interaction with tRNA.

It belongs to the MnmA/TRMU family.

The protein localises to the cytoplasm. It carries out the reaction S-sulfanyl-L-cysteinyl-[protein] + uridine(34) in tRNA + AH2 + ATP = 2-thiouridine(34) in tRNA + L-cysteinyl-[protein] + A + AMP + diphosphate + H(+). In terms of biological role, catalyzes the 2-thiolation of uridine at the wobble position (U34) of tRNA, leading to the formation of s(2)U34. The chain is tRNA-specific 2-thiouridylase MnmA from Psychrobacter arcticus (strain DSM 17307 / VKM B-2377 / 273-4).